Here is a 491-residue protein sequence, read N- to C-terminus: Myocilin (491 aa).

The signal sequence occupies residues methionine 1 to alanine 18. N-linked (GlcNAc...) asparagine glycosylation occurs at asparagine 43. Residues glutamine 98–glutamine 171 are a coiled coil. Residues glutamate 151 to valine 189 form a disordered region. Residues glycine 231–lysine 490 form the Olfactomedin-like domain. The cysteines at positions 232 and 420 are disulfide-linked. Aspartate 367, asparagine 415, alanine 416, isoleucine 464, and aspartate 465 together coordinate Ca(2+).

In terms of assembly, homodimer (via N-terminus). Can also form higher oligomers. Interacts with OLFM3, FN1, NRCAM, GLDN and NFASC. Interacts (via N-terminus) with MYL2. Interacts with SFRP1, FRZB, FZD7, FZD10, FZD1 and WIF1; regulates Wnt signaling. Interacts with SNTA1; regulates muscle hypertrophy. Interacts with ERBB2 and ERBB3; activates ERBB2-ERBB3 signaling pathway. Interacts with SNCG; affects its secretion and its aggregation. Palmitoylated. Post-translationally, undergoes a calcium-dependent proteolytic cleavage at Arg-213 by CAPN2 in the endoplasmic reticulum. The result is the production of two fragments, one of 35 kDa containing the C-terminal olfactomedin-like domain, and another of 20 kDa containing the N-terminal leucine zipper-like domain. In terms of processing, glycosylated.

The protein resides in the secreted. It is found in the golgi apparatus. Its subcellular location is the cytoplasmic vesicle. The protein localises to the extracellular space. It localises to the extracellular matrix. The protein resides in the extracellular exosome. It is found in the mitochondrion. Its subcellular location is the mitochondrion intermembrane space. The protein localises to the mitochondrion inner membrane. It localises to the mitochondrion outer membrane. The protein resides in the rough endoplasmic reticulum. It is found in the cell projection. Its subcellular location is the cilium. The protein localises to the endoplasmic reticulum. In terms of biological role, secreted glycoprotein regulating the activation of different signaling pathways in adjacent cells to control different processes including cell adhesion, cell-matrix adhesion, cytoskeleton organization and cell migration. Promotes substrate adhesion, spreading and formation of focal contacts. Negatively regulates cell-matrix adhesion and stress fiber assembly through Rho protein signal transduction. Modulates the organization of actin cytoskeleton by stimulating the formation of stress fibers through interactions with components of Wnt signaling pathways. Promotes cell migration through activation of PTK2 and the downstream phosphatidylinositol 3-kinase signaling. Plays a role in bone formation and promotes osteoblast differentiation in a dose-dependent manner through mitogen-activated protein kinase signaling. Mediates myelination in the peripheral nervous system through ERBB2/ERBB3 signaling. Plays a role as a regulator of muscle hypertrophy through the components of dystrophin-associated protein complex. Involved in positive regulation of mitochondrial depolarization. Plays a role in neurite outgrowth. May participate in the obstruction of fluid outflow in the trabecular meshwork. The chain is Myocilin (MYOC) from Macaca fascicularis (Crab-eating macaque).